Consider the following 845-residue polypeptide: Leucine--tRNA ligase (845 aa).

The 'HIGH' region signature appears at 40–51 (PYPSGAGLHVGH). The short motif at 623-627 (KMSKS) is the 'KMSKS' region element. Lys626 contributes to the ATP binding site.

This sequence belongs to the class-I aminoacyl-tRNA synthetase family.

It is found in the cytoplasm. It catalyses the reaction tRNA(Leu) + L-leucine + ATP = L-leucyl-tRNA(Leu) + AMP + diphosphate. This chain is Leucine--tRNA ligase, found in Protochlamydia amoebophila (strain UWE25).